Reading from the N-terminus, the 81-residue chain is MESLGATVKKPGSTVKNKTGSWRTFKPVLDKDKCIDCDNCILFCPEGCINREHEIDYDYCKGCGICAEKCPVKAIKMEREK.

2 4Fe-4S ferredoxin-type domains span residues 25 to 50 (FKPV…GCIN) and 51 to 80 (REHE…MERE). Positions 34, 37, 40, 44, 60, 63, 66, and 70 each coordinate [4Fe-4S] cluster.

In terms of assembly, heterotetramer of one alpha, one beta, one delta and one gamma chain. Requires [4Fe-4S] cluster as cofactor.

The protein is Pyruvate synthase subunit PorD (porD) of Methanothermobacter thermautotrophicus (strain ATCC 29096 / DSM 1053 / JCM 10044 / NBRC 100330 / Delta H) (Methanobacterium thermoautotrophicum).